A 906-amino-acid polypeptide reads, in one-letter code: UPF0182 protein CA_C0010 (906 aa).

Helical transmembrane passes span 7–29 (IVTIILFLLVIVGSFGKVTDFII), 47–69 (LAAILKLMIPIFIIIYTGLWFYY), 96–118 (VAIVIDVIASFFVAYFTSSVYWY), 153–175 (LYGVMLLFLIFMAVLTVILYIVL), 208–230 (FAIISGLIMFLVAVGYAIRSFNL), 250–272 (LVFYVIIIAAAIVSSVVIFTSII), and 279–301 (IFVSIVAILILIIGQSITAEIVQ). The span at 842–862 (NSSNNQSETRTETGGTSTDSS) shows a compositional bias: low complexity. Positions 842 to 875 (NSSNNQSETRTETGGTSTDSSNNKDKLKQAQDLY) are disordered.

Belongs to the UPF0182 family.

The protein localises to the cell membrane. This Clostridium acetobutylicum (strain ATCC 824 / DSM 792 / JCM 1419 / IAM 19013 / LMG 5710 / NBRC 13948 / NRRL B-527 / VKM B-1787 / 2291 / W) protein is UPF0182 protein CA_C0010.